The primary structure comprises 123 residues: Protein Wnt-3a (123 aa).

A lipid anchor (O-palmitoleoyl serine) is attached at Ser1. A disulfide bond links Cys89 and Cys104. An N-linked (GlcNAc...) asparagine glycan is attached at Asn90.

The protein belongs to the Wnt family. In terms of processing, disulfide bonds have critical and distinct roles in secretion and activity. Loss of each conserved cysteine results in high molecular weight oxidized Wnt oligomers, which are formed through inter-Wnt disulfide bonding. Palmitoleoylation is required for efficient binding to frizzled receptors. Depalmitoleoylation leads to Wnt signaling pathway inhibition.

It localises to the secreted. The protein localises to the extracellular space. Its subcellular location is the extracellular matrix. Ligand for members of the frizzled family of seven transmembrane receptors. Functions in the canonical Wnt signaling pathway that results in activation of transcription factors of the TCF/LEF family. Required for normal embryonic mesoderm development and formation of caudal somites. Required for normal morphogenesis of the developing neural tube. This Meleagris gallopavo (Wild turkey) protein is Protein Wnt-3a (WNT3A).